The sequence spans 137 residues: Large ribosomal subunit protein uL16 (137 aa).

The protein belongs to the universal ribosomal protein uL16 family. Part of the 50S ribosomal subunit.

Binds 23S rRNA and is also seen to make contacts with the A and possibly P site tRNAs. The sequence is that of Large ribosomal subunit protein uL16 from Bradyrhizobium sp. (strain ORS 278).